The following is a 266-amino-acid chain: Putative [LysW]-aminoadipate/[LysW]-glutamate kinase (266 aa).

Substrate contacts are provided by residues 36 to 37 (GG), Arg-63, and Asn-168.

It belongs to the acetylglutamate kinase family. LysZ subfamily.

It localises to the cytoplasm. It carries out the reaction [amino-group carrier protein]-C-terminal-N-(1,4-dicarboxybutan-1-yl)-L-glutamine + ATP = [amino-group carrier protein]-C-terminal-N-(1-carboxy-5-phosphooxy-5-oxopentan-1-yl)-L-glutamine + ADP. The catalysed reaction is [amino-group carrier protein]-C-terminal-gamma-(L-glutamyl)-L-glutamate + ATP = [amino-group carrier protein]-C-terminal-gamma-(5-phospho-L-glutamyl)-L-glutamate + ADP. It participates in amino-acid biosynthesis; L-lysine biosynthesis via AAA pathway; L-lysine from L-alpha-aminoadipate (Thermus route): step 2/5. The protein operates within amino-acid biosynthesis; L-arginine biosynthesis. Functionally, involved in both the arginine and lysine biosynthetic pathways. Phosphorylates the LysW-bound precursors glutamate (for arginine biosynthesis), respectively alpha-aminoadipate (for lysine biosynthesis). The chain is Putative [LysW]-aminoadipate/[LysW]-glutamate kinase from Cenarchaeum symbiosum (strain A).